A 179-amino-acid polypeptide reads, in one-letter code: MGLFFSKISSFMFPNIECRTLMLGLDGAGKTTILYKLKLNETVNTIPTIGFNVETVTFQKITLTVWDVGGQKKIRALWKYYFPNTTTLVFVVDSSDIERIPEAKEELFSLLAEPELADSHLLVFANKQDMPNARSPAELTQLLDLGSLKNREWFICGTNAHSGQGLYEGLMWVKKQMKT.

Residue glycine 2 is the site of N-myristoyl glycine attachment. An important for the stable binding to the membranes region spans residues 3-16; that stretch reads LFFSKISSFMFPNI. GTP contacts are provided by residues 24-32, 126-129, and alanine 160; these read GLDGAGKTT and NKQD.

This sequence belongs to the small GTPase superfamily. Arf family.

It is found in the golgi apparatus membrane. The catalysed reaction is GTP + H2O = GDP + phosphate + H(+). Its activity is regulated as follows. Alternates between an inactive GDP-bound form and an active GTP-bound form. Activated by a guanine nucleotide-exchange factor (GEF) and inactivated by GTPase-activating protein (GAP). Small GTPase involved in protein trafficking between different compartments. Modulates vesicle budding and uncoating within the Golgi complex. In its GTP-bound form, triggers the recruitment of coatomer proteins to the Golgi membrane. The hydrolysis of ARF1-bound GTP, which is mediated by ARFGAPs proteins, is required for dissociation of coat proteins from Golgi membranes and vesicles. The protein is ADP-ribosylation factor 1-like 1 (arf-1.1) of Caenorhabditis elegans.